Consider the following 49-residue polypeptide: Large ribosomal subunit protein bL33B (49 aa).

This sequence belongs to the bacterial ribosomal protein bL33 family.

The polypeptide is Large ribosomal subunit protein bL33B (rpmGB) (Bacillus licheniformis).